A 513-amino-acid chain; its full sequence is V-type proton ATPase subunit B, kidney isoform (513 aa).

Arg394 is an ATP binding site. Residues 510–513 (DTAL) carry the PDZ-binding motif.

It belongs to the ATPase alpha/beta chains family. As to quaternary structure, V-ATPase is a heteromultimeric enzyme made up of two complexes: the ATP-hydrolytic V1 complex and the proton translocation V0 complex. The V1 complex consists of three catalytic AB heterodimers that form a heterohexamer, three peripheral stalks each consisting of EG heterodimers, one central rotor including subunits D and F, and the regulatory subunits C and H. The proton translocation complex V0 consists of the proton transport subunit a, a ring of proteolipid subunits c9c'', rotary subunit d, subunits e and f, and the accessory subunits ATP6AP1/Ac45 and ATP6AP2/PRR. Forms a complex with NHERF1 and SCL4A7. In terms of tissue distribution, kidney cortex and medulla.

The protein resides in the apical cell membrane. It is found in the basolateral cell membrane. Its function is as follows. Non-catalytic subunit of the V1 complex of vacuolar(H+)-ATPase (V-ATPase), a multisubunit enzyme composed of a peripheral complex (V1) that hydrolyzes ATP and a membrane integral complex (V0) that translocates protons. V-ATPase is responsible for acidifying and maintaining the pH of intracellular compartments and in some cell types, is targeted to the plasma membrane, where it is responsible for acidifying the extracellular environment. Essential for the proper assembly and activity of V-ATPase. In renal intercalated cells, mediates secretion of protons (H+) into the urine thereby ensuring correct urinary acidification. Required for optimal olfactory function by mediating the acidification of the nasal olfactory epithelium. This is V-type proton ATPase subunit B, kidney isoform (ATP6V1B1) from Bos taurus (Bovine).